We begin with the raw amino-acid sequence, 718 residues long: MIMEIPAIKALSRYAQWVIWKKERDTKIPYNPNNGKKASSTDPLAWGDIDEAQAGLVRYGANGLGFVLTKSDPFVFIDLDHVLDENKRVKCEWARQLLKEIKSYTEISPSGDGLHVVVSGKLPDYIKHKTKFDDGSALEVYESGRYMTITGEVFDGRDDIKELDLSILGEFAEHKIETKNAPVQIESATTLDDEAIIDLMKRKGQWPDAPKDGDDWSSLDMSFANRLAFWCGKDIERMDRIFRQSPLMRQKWDRPTAGSTYGRITLKKACDFVDSVYDPALRNESDCPFEPYNEEGGPRNDKEEKDPLWLYKVLLTKGIEVWFDIKLEKYGIKRNNRVDYIAKSSLQQIVFEIIGKTPKNIAVPTYIGAYEPSKPEKWEEEGIKYINLFKPTPLMKVKPVKEMPEIVKNLLLNLFDYDAKSMGLFINWLAFIYQYKERTGVAWIFMGKQGTGKGLLVDLLKKIFEEHMSSNITDANLDSQFNPYLYNKLIVHLNEVSADNRKSRMLVKNRLKTWITDETLYINRKNMKEVEIKNFCNFIINSNETIPVDIEDSDRRFNVIECNNVLKEQEWWTTESYQEILNNAEGFAKYLAGIKVDRSKVNEVVMSEKKKAIVETTESVLKQIAKALTDRDIEWFLDNGLEGVVEKNIVNDFQWEELQEAITTGVIPNKYLMIIVEQILGDSKTITWIKRNIITPYQVGETTVVKMAGKPIRAIVVG.

Residues 1 to 176 are polymerase; sequence MIMEIPAIKA…ILGEFAEHKI (176 aa). The segment at 1–292 is primase; that stretch reads MIMEIPAIKA…NESDCPFEPY (292 aa). Catalysis depends on for polymerase activity residues aspartate 78 and aspartate 80. Positions 78, 80, 108, and 115 each coordinate Mg(2+). Histidine 115 (for polymerase activity) is an active-site residue. Glutamate 139 acts as the For polymerase and primase activities in catalysis. A DNA-binding site is contributed by 304 to 718; it reads EKDPLWLYKV…GKPIRAIVVG (415 aa). The segment at 404–593 is helicase; that stretch reads PEIVKNLLLN…AEGFAKYLAG (190 aa).

Homohexamer. The cofactor is Mg(2+).

It catalyses the reaction DNA(n) + a 2'-deoxyribonucleoside 5'-triphosphate = DNA(n+1) + diphosphate. The enzyme catalyses ATP + H2O = ADP + phosphate + H(+). Its function is as follows. Multifunctional protein with primer synthesis, DNA polymerization, and DNA helicase activities. Recognizes a specific sequence motif 5'-TTTGGTTA-3' and initiates DNA synthesis. This is DNA Primase-polymerase (28) from Nitratiruptor phage NrS-1.